Consider the following 476-residue polypeptide: Bifunctional protein HldE (476 aa).

A ribokinase region spans residues 1–318 (MKLDLTVLEQ…YTALHGDKLA (318 aa)). 195 to 198 (NLGE) contacts ATP. Residue Asp-264 is part of the active site. A cytidylyltransferase region spans residues 344-476 (MTNGCFDILH…MIDTILDREG (133 aa)).

The protein in the N-terminal section; belongs to the carbohydrate kinase PfkB family. It in the C-terminal section; belongs to the cytidylyltransferase family. Homodimer.

It carries out the reaction D-glycero-beta-D-manno-heptose 7-phosphate + ATP = D-glycero-beta-D-manno-heptose 1,7-bisphosphate + ADP + H(+). The catalysed reaction is D-glycero-beta-D-manno-heptose 1-phosphate + ATP + H(+) = ADP-D-glycero-beta-D-manno-heptose + diphosphate. Its pathway is nucleotide-sugar biosynthesis; ADP-L-glycero-beta-D-manno-heptose biosynthesis; ADP-L-glycero-beta-D-manno-heptose from D-glycero-beta-D-manno-heptose 7-phosphate: step 1/4. It participates in nucleotide-sugar biosynthesis; ADP-L-glycero-beta-D-manno-heptose biosynthesis; ADP-L-glycero-beta-D-manno-heptose from D-glycero-beta-D-manno-heptose 7-phosphate: step 3/4. Catalyzes the phosphorylation of D-glycero-D-manno-heptose 7-phosphate at the C-1 position to selectively form D-glycero-beta-D-manno-heptose-1,7-bisphosphate. In terms of biological role, catalyzes the ADP transfer from ATP to D-glycero-beta-D-manno-heptose 1-phosphate, yielding ADP-D-glycero-beta-D-manno-heptose. The protein is Bifunctional protein HldE of Chromohalobacter salexigens (strain ATCC BAA-138 / DSM 3043 / CIP 106854 / NCIMB 13768 / 1H11).